A 520-amino-acid chain; its full sequence is Cytochrome P450 734A1 (520 aa).

A helical membrane pass occupies residues 13-33; it reads VLVLSVILSLVIVKGMSLLWW. Position 463 (Cys463) interacts with heme.

This sequence belongs to the cytochrome P450 family. Heme serves as cofactor.

It localises to the membrane. Its function is as follows. Cytochrome P450 involved in brassinosteroids (BRs) inactivation and regulation of BRs homeostasis. Inactivates the BRs castasterone (CS) and brassinolide (BL) through carbon 26 hydroxylation. Acts in association with CYP72C1 to inactivate BRs and modulate photomorphogenesis. This chain is Cytochrome P450 734A1 (CYP734A1), found in Arabidopsis thaliana (Mouse-ear cress).